A 446-amino-acid chain; its full sequence is Signal recognition particle protein (446 aa).

GTP-binding positions include 106–113 (GLQGSGKT), 188–192 (DTAGR), and 246–249 (SKLD).

Belongs to the GTP-binding SRP family. SRP54 subfamily. In terms of assembly, part of the signal recognition particle protein translocation system, which is composed of SRP and FtsY.

It localises to the cytoplasm. The enzyme catalyses GTP + H2O = GDP + phosphate + H(+). Its function is as follows. Involved in targeting and insertion of nascent membrane proteins into the cytoplasmic membrane. Binds to the hydrophobic signal sequence of the ribosome-nascent chain (RNC) as it emerges from the ribosomes. The SRP-RNC complex is then targeted to the cytoplasmic membrane where it interacts with the SRP receptor FtsY. In Mycoplasma genitalium (strain ATCC 33530 / DSM 19775 / NCTC 10195 / G37) (Mycoplasmoides genitalium), this protein is Signal recognition particle protein.